Reading from the N-terminus, the 201-residue chain is NAD(P)H quinone oxidoreductase PST2 (201 aa).

Residues 6 to 192 form the Flavodoxin-like domain; it reads VAIIIYSLYH…SIAQQQGEDF (187 aa). FMN-binding positions include 12–16 and 112–164; these read SLYHH and VFVS…SPWG.

The protein belongs to the WrbA family. The cofactor is FMN.

It is found in the cell membrane. The enzyme catalyses a quinone + NADH + H(+) = a quinol + NAD(+). It carries out the reaction a quinone + NADPH + H(+) = a quinol + NADP(+). Flavodoxin-like protein (FLP) that plays a role in cell wall integrity, oxidative stress protection and virulence. FLPs act as NAD(P)H quinone oxidoreductases. Reduces ubiquinone (coenzyme Q), enabling it to serve as an antioxidant in the membrane. This Candida albicans (strain SC5314 / ATCC MYA-2876) (Yeast) protein is NAD(P)H quinone oxidoreductase PST2.